Consider the following 225-residue polypeptide: Putative 5'-nucleotidase alr3139 (225 aa).

Residues D8, D9, S37, and N88 each contribute to the a divalent metal cation site.

This sequence belongs to the SurE nucleotidase family. The cofactor is a divalent metal cation.

The protein localises to the cytoplasm. The enzyme catalyses a ribonucleoside 5'-phosphate + H2O = a ribonucleoside + phosphate. In terms of biological role, nucleotidase that shows phosphatase activity on nucleoside 5'-monophosphates. In Synechocystis sp. (strain ATCC 27184 / PCC 6803 / Kazusa), this protein is Putative 5'-nucleotidase alr3139.